Here is a 362-residue protein sequence, read N- to C-terminus: 3-isopropylmalate dehydrogenase (362 aa).

77-88 (GPKWGTGAVRPE) lines the NAD(+) pocket. Substrate is bound by residues arginine 95, arginine 105, arginine 134, and aspartate 223. Mg(2+) contacts are provided by aspartate 223, aspartate 248, and aspartate 252. NAD(+) is bound at residue 287–298 (GSAPDLPPNKVN).

It belongs to the isocitrate and isopropylmalate dehydrogenases family. As to quaternary structure, homodimer. The cofactor is Mg(2+). Mn(2+) serves as cofactor.

It is found in the cytoplasm. It carries out the reaction (2R,3S)-3-isopropylmalate + NAD(+) = 4-methyl-2-oxopentanoate + CO2 + NADH. It participates in amino-acid biosynthesis; L-leucine biosynthesis; L-leucine from 3-methyl-2-oxobutanoate: step 3/4. Its function is as follows. Catalyzes the oxidation of 3-carboxy-2-hydroxy-4-methylpentanoate (3-isopropylmalate) to 3-carboxy-4-methyl-2-oxopentanoate. The product decarboxylates to 4-methyl-2 oxopentanoate. The sequence is that of 3-isopropylmalate dehydrogenase (LEU2) from Blastobotrys adeninivorans (Yeast).